The chain runs to 365 residues: Glycerol dehydrogenase (365 aa).

The NAD(+) site is built by Asp-37, Gly-94, Lys-95, Thr-116, and Ser-119. Position 121 (Asp-121) interacts with glycerol. Positions 125, 127, and 131 each coordinate NAD(+). The Mn(2+) site is built by Asp-171, His-254, and His-271. Glycerol is bound at residue His-254.

This sequence belongs to the iron-containing alcohol dehydrogenase family. Homohexamer. Mn(2+) serves as cofactor.

It catalyses the reaction glycerol + NAD(+) = dihydroxyacetone + NADH + H(+). The catalysed reaction is hydroxyacetone + NADH + H(+) = (S)-propane-1,2-diol + NAD(+). It participates in polyol metabolism; glycerol fermentation; glycerone phosphate from glycerol (oxidative route): step 1/2. Inhibited by zinc. Catalyzes the NAD-dependent oxidation of glycerol to dihydroxyacetone (glycerone). Allows microorganisms to utilize glycerol as a source of carbon under anaerobic conditions. Exhibits a rather broad substrate specificity since it can also oxidize 1,2-propanediol and 2,3-butanediol and reduce dihydroxyacetone. Cannot use NADP(+) as an electron acceptor for the oxidation of glycerol. This chain is Glycerol dehydrogenase, found in Citrobacter freundii.